The chain runs to 460 residues: ATP synthase subunit beta (460 aa).

150-157 (GGAGVGKT) serves as a coordination point for ATP.

It belongs to the ATPase alpha/beta chains family. F-type ATPases have 2 components, CF(1) - the catalytic core - and CF(0) - the membrane proton channel. CF(1) has five subunits: alpha(3), beta(3), gamma(1), delta(1), epsilon(1). CF(0) has three main subunits: a(1), b(2) and c(9-12). The alpha and beta chains form an alternating ring which encloses part of the gamma chain. CF(1) is attached to CF(0) by a central stalk formed by the gamma and epsilon chains, while a peripheral stalk is formed by the delta and b chains.

The protein resides in the cell inner membrane. The catalysed reaction is ATP + H2O + 4 H(+)(in) = ADP + phosphate + 5 H(+)(out). Its function is as follows. Produces ATP from ADP in the presence of a proton gradient across the membrane. The catalytic sites are hosted primarily by the beta subunits. This Yersinia enterocolitica serotype O:8 / biotype 1B (strain NCTC 13174 / 8081) protein is ATP synthase subunit beta.